We begin with the raw amino-acid sequence, 301 residues long: Probable alpha-L-glutamate ligase (301 aa).

Residues 104–287 (LQFLSRKGID…IAGMIIEFIE (184 aa)) form the ATP-grasp domain. ATP-binding positions include K141, 178–179 (EF), D187, and 211–213 (RSN). Residues D248, E260, and N262 each coordinate Mg(2+). D248, E260, and N262 together coordinate Mn(2+).

Belongs to the RimK family. The cofactor is Mg(2+). Mn(2+) serves as cofactor.

This Coxiella burnetii (strain CbuK_Q154) (Coxiella burnetii (strain Q154)) protein is Probable alpha-L-glutamate ligase.